The sequence spans 290 residues: Porphobilinogen deaminase (290 aa).

Residue Cys-237 is modified to S-(dipyrrolylmethanemethyl)cysteine.

It belongs to the HMBS family. As to quaternary structure, monomer. Dipyrromethane serves as cofactor.

The enzyme catalyses 4 porphobilinogen + H2O = hydroxymethylbilane + 4 NH4(+). Its pathway is porphyrin-containing compound metabolism; protoporphyrin-IX biosynthesis; coproporphyrinogen-III from 5-aminolevulinate: step 2/4. Tetrapolymerization of the monopyrrole PBG into the hydroxymethylbilane pre-uroporphyrinogen in several discrete steps. The chain is Porphobilinogen deaminase from Clostridium botulinum (strain Langeland / NCTC 10281 / Type F).